Here is a 516-residue protein sequence, read N- to C-terminus: GPI mannosyltransferase 4 (516 aa).

Topologically, residues Met1–Gln5 are lumenal. Residues Trp6 to His26 form a helical membrane-spanning segment. The Cytoplasmic segment spans residues Pro27 to Ser60. The helical transmembrane segment at Tyr61–Ile81 threads the bilayer. The Lumenal segment spans residues Gln82–Val175. The chain crosses the membrane as a helical span at residues Ile176–Phe196. The Cytoplasmic segment spans residues Leu197 to His210. Residues Trp211 to Ile231 traverse the membrane as a helical segment. The Lumenal segment spans residues Asp232–His270. Residues Leu271–Tyr291 traverse the membrane as a helical segment. Residues Lys292–Lys295 are Cytoplasmic-facing. Residues Leu296–Leu316 traverse the membrane as a helical segment. Residue Arg317 is a topological domain, lumenal. A helical transmembrane segment spans residues Phe318–Thr338. Topologically, residues Leu339–Thr348 are cytoplasmic. A helical membrane pass occupies residues Trp349–Ile369. Residues Gln370 to Leu516 are Lumenal-facing. N-linked (GlcNAc...) asparagine glycosylation is found at Asn403 and Asn452.

Belongs to the glycosyltransferase 22 family. PIGZ subfamily.

The protein localises to the endoplasmic reticulum membrane. It participates in glycolipid biosynthesis; glycosylphosphatidylinositol-anchor biosynthesis. Functionally, alpha-1,2-mannosyltransferase involved in glycosylphosphatidylinositol-anchor biosynthesis. Transfers a fourth mannose to trimannosyl-GPIs during GPI precursor assembly. The presence of a fourth mannose in GPI is essential in fungi. Involved in plasmid maintenance with SMP2. This chain is GPI mannosyltransferase 4 (SMP3), found in Saccharomyces cerevisiae (strain ATCC 204508 / S288c) (Baker's yeast).